Reading from the N-terminus, the 586-residue chain is Putative butyrophilin subfamily 2 member A3 (586 aa).

An N-terminal signal peptide occupies residues 1–27 (MEPAAALHFSRPASLLLLLSLCALVSA). The Ig-like V-type domain occupies 28-139 (QVTVVGPTDP…SCNEAILHLV (112 aa)). Residues 28–246 (QVTVVGPTDP…SFMPSRSPCV (219 aa)) lie on the Extracellular side of the membrane. 4 N-linked (GlcNAc...) asparagine glycosylation sites follow: N45, N112, N214, and N220. Residues C50 and C123 are joined by a disulfide bond. The helical transmembrane segment at 247–267 (VILPVIMIILMIPIAICIYWI) threads the bilayer. Topologically, residues 268-586 (NNLQKEKKDS…VPQLPARKKV (319 aa)) are cytoplasmic. The B30.2/SPRY domain maps to 281 to 474 (TFNLCLSLAG…ILICSAFTGA (194 aa)).

This sequence belongs to the immunoglobulin superfamily. BTN/MOG family.

The protein localises to the membrane. The polypeptide is Putative butyrophilin subfamily 2 member A3 (BTN2A3P) (Homo sapiens (Human)).